A 241-amino-acid chain; its full sequence is Probable phosphatase Cthe_0111 (241 aa).

Zn(2+)-binding residues include His8, His10, His16, His41, Glu74, His102, His132, Asp192, and His194.

It belongs to the PHP family. Zn(2+) is required as a cofactor.

The polypeptide is Probable phosphatase Cthe_0111 (Acetivibrio thermocellus (strain ATCC 27405 / DSM 1237 / JCM 9322 / NBRC 103400 / NCIMB 10682 / NRRL B-4536 / VPI 7372) (Clostridium thermocellum)).